Here is a 788-residue protein sequence, read N- to C-terminus: Endonuclease MutS2 (788 aa).

Position 334-341 (334-341 (GPNTGGKT)) interacts with ATP. Residues 713 to 788 (LDLRGQRYEE…GTGATIVYLQ (76 aa)) enclose the Smr domain.

The protein belongs to the DNA mismatch repair MutS family. MutS2 subfamily. As to quaternary structure, homodimer. Binds to stalled ribosomes, contacting rRNA.

In terms of biological role, endonuclease that is involved in the suppression of homologous recombination and thus may have a key role in the control of bacterial genetic diversity. Functionally, acts as a ribosome collision sensor, splitting the ribosome into its 2 subunits. Detects stalled/collided 70S ribosomes which it binds and splits by an ATP-hydrolysis driven conformational change. Acts upstream of the ribosome quality control system (RQC), a ribosome-associated complex that mediates the extraction of incompletely synthesized nascent chains from stalled ribosomes and their subsequent degradation. Probably generates substrates for RQC. The protein is Endonuclease MutS2 of Lactobacillus johnsonii (strain CNCM I-12250 / La1 / NCC 533).